Here is a 346-residue protein sequence, read N- to C-terminus: SUMO-activating enzyme subunit 1 (346 aa).

At Met1 the chain carries N-acetylmethionine. Val2 is modified (N-acetylvaline; in SUMO-activating enzyme subunit 1, N-terminally processed). Residue Ser12 is modified to Phosphoserine. Lys198 carries the post-translational modification N6-acetyllysine.

It belongs to the ubiquitin-activating E1 family. Heterodimer of SAE1 and UBA2/SAE2. The heterodimer corresponds to the two domains that are encoded on a single polypeptide chain in ubiquitin-activating enzyme E1. Interacts with UBE2I.

The protein localises to the nucleus. It functions in the pathway protein modification; protein sumoylation. Its function is as follows. The heterodimer acts as an E1 ligase for SUMO1, SUMO2, SUMO3, and probably SUMO4. It mediates ATP-dependent activation of SUMO proteins followed by formation of a thioester bond between a SUMO protein and a conserved active site cysteine residue on UBA2/SAE2. The polypeptide is SUMO-activating enzyme subunit 1 (SAE1) (Bos taurus (Bovine)).